The primary structure comprises 352 residues: tRNA pseudouridine synthase D (352 aa).

Asp81 acts as the Nucleophile in catalysis. The TRUD domain maps to Gly157–Leu303.

It belongs to the pseudouridine synthase TruD family.

It catalyses the reaction uridine(13) in tRNA = pseudouridine(13) in tRNA. Responsible for synthesis of pseudouridine from uracil-13 in transfer RNAs. In Pseudomonas putida (strain GB-1), this protein is tRNA pseudouridine synthase D.